A 113-amino-acid chain; its full sequence is uncharacterized protein (113 aa).

A Cupin type-2 domain is found at 41 to 88 (DWHHHPDSDELFIVLEGELLIDFKDKETAVLKANDSLLIPKGTVHRTR).

It belongs to the SchB/CurC family.

This is an uncharacterized protein from Bacillus subtilis (strain 168).